Reading from the N-terminus, the 372-residue chain is MTAAPLTFTLPDLLANFPWKRNLSEYYPECKTESSAWTESFHPFDDEGLKGFNLCDFNLLASLAYSPREREIIRLGCDLMNIFYVFDEYTDIADGDGADKIRDIIMDAFRNPHKPRPEGELLVGEMARDFWIRASGYVSPDAHCLTHFLRDFDTYTAAVVREADDRAKRVYRTFEDYLSIRRDSSGCLPSFALCEFGLDLPEEAYHHPRMAALREQSTDLIAIGNDIDSYAMEKARGLELHNSVELIINEHGLDVQGAINWLERYAAGVHASFLDNVANMPSWGEDVDRRVKMYIDGLAQWVRGNDDWTFESGRYFGDKGLEVQKTRVMSLLPASKVSLRSRPKAVGHVPKKLLRYFRYSTMYFFGFHVLAK.

Mg(2+) contacts are provided by aspartate 87, asparagine 225, serine 229, and glutamate 233. The short motif at 87-91 (DEYTD) is the DDXXD motif element. Arginine 314 and tyrosine 315 together coordinate (2E,6E)-farnesyl diphosphate.

Belongs to the terpene synthase family. It depends on Mg(2+) as a cofactor.

The catalysed reaction is (2E,6E)-farnesyl diphosphate = gamma-muurolene + diphosphate. The enzyme catalyses (2E,6E)-farnesyl diphosphate = delta-cadinene + diphosphate. Functionally, terpene cyclase that catalyzes the cyclization of farnesyl diphosphate (FPP) to various sesquiterpenes, including gamma-muurolene, beta-cadinene and delta-cadinene. This is Sesquiterpene synthase Agr9 from Cyclocybe aegerita (Black poplar mushroom).